The following is a 289-amino-acid chain: NAD(P)H-hydrate epimerase (289 aa).

The YjeF N-terminal domain occupies 71 to 277 (AQTIDNELMS…SIVEKYNLKI (207 aa)). Residue 122–126 (NNGGD) coordinates (6S)-NADPHX. K(+) is bound by residues Asn123 and Asp185. (6S)-NADPHX-binding positions include 189-195 (GFSFRGE) and Asp218. Ser221 is a binding site for K(+).

Belongs to the NnrE/AIBP family. It depends on K(+) as a cofactor.

The enzyme catalyses (6R)-NADHX = (6S)-NADHX. The catalysed reaction is (6R)-NADPHX = (6S)-NADPHX. Functionally, catalyzes the epimerization of the S- and R-forms of NAD(P)HX, a damaged form of NAD(P)H that is a result of enzymatic or heat-dependent hydration. This is a prerequisite for the S-specific NAD(P)H-hydrate dehydratase to allow the repair of both epimers of NAD(P)HX. This chain is NAD(P)H-hydrate epimerase, found in Plasmodium knowlesi (strain H).